The primary structure comprises 346 residues: Galactitol 1-phosphate 5-dehydrogenase (346 aa).

Residues Cys-38, His-59, Cys-89, Cys-92, Cys-95, Cys-103, and Glu-144 each coordinate Zn(2+).

It belongs to the zinc-containing alcohol dehydrogenase family. Zn(2+) serves as cofactor.

The enzyme catalyses galactitol 1-phosphate + NAD(+) = keto-D-tagatose 6-phosphate + NADH + H(+). Functionally, converts galactitol 1-phosphate to tagatose 6-phosphate. In Escherichia coli O157:H7, this protein is Galactitol 1-phosphate 5-dehydrogenase (gatD).